We begin with the raw amino-acid sequence, 274 residues long: Rhamnulose-1-phosphate aldolase (274 aa).

The active site involves glutamate 117. Residues histidine 141, histidine 143, and histidine 212 each coordinate Zn(2+).

It belongs to the aldolase class II family. RhaD subfamily. Homotetramer. The cofactor is Zn(2+).

Its subcellular location is the cytoplasm. It catalyses the reaction L-rhamnulose 1-phosphate = (S)-lactaldehyde + dihydroxyacetone phosphate. The protein operates within carbohydrate degradation; L-rhamnose degradation; glycerone phosphate from L-rhamnose: step 3/3. Functionally, catalyzes the reversible cleavage of L-rhamnulose-1-phosphate to dihydroxyacetone phosphate (DHAP) and L-lactaldehyde. The chain is Rhamnulose-1-phosphate aldolase from Yersinia pseudotuberculosis serotype I (strain IP32953).